The primary structure comprises 108 residues: AFELTQTPSSVEAAVGGTVTIKCQSSQSIGTYLAWYZZKPGQPPKLLIYRASTLASGVSSRFKGSGSGTEFTLTISGVECADAATYYCQGTYYZSASFGGGTEVVVKG.

The segment at 1-23 (AFELTQTPSSVEAAVGGTVTIKC) is framework-1. The complementarity-determining-1 stretch occupies residues 24-34 (QSSQSIGTYLA). The interval 35-49 (WYZZKPGQPPKLLIY) is framework-2. Positions 50–56 (RASTLAS) are complementarity-determining-2. The segment at 57 to 88 (GVSSRFKGSGSGTEFTLTISGVECADAATYYC) is framework-3. Positions 89 to 97 (QGTYYZSAS) are complementarity-determining-3. The tract at residues 98–107 (FGGGTEVVVK) is framework-4.

In Oryctolagus cuniculus (Rabbit), this protein is Ig kappa chain V region 120.